The chain runs to 359 residues: MNIYDQLQAVEDRYEELGELLSDPDVVSDTKRFMELSREEANSRETVAVYREYKQVVQNIADAQEMIKDASGDPELEEMAKEELKNSKVAKEEYEEKLRFLLLPKDPNDDKNIILEIRGAAGGDEAALFAGDLLNMYQKYAENQGWKFEVMEASANGVGGLKEVVAMVSGQSVYSKLKYESGAHRVQRVPVTESQGRVHTSTATVLVMPEVEEVEYEIDPKDLRVDIYHASGAGGQNVNKVATAVRIIHLPTNIKVEMQEERTQQKNRDKAMKIIRARVADHFAQIAQDEQDAERKSTVGTGDRSERIRTYNFPQNRVTDHRIGLTLQKLDSILSGKLDEVIDALILYDQTQKLEELNK.

An N5-methylglutamine modification is found at Q236.

Belongs to the prokaryotic/mitochondrial release factor family. In terms of processing, methylated by PrmC. Methylation increases the termination efficiency of RF1.

Its subcellular location is the cytoplasm. Functionally, peptide chain release factor 1 directs the termination of translation in response to the peptide chain termination codons UAG and UAA. The sequence is that of Peptide chain release factor 1 from Streptococcus mutans serotype c (strain ATCC 700610 / UA159).